Here is a 437-residue protein sequence, read N- to C-terminus: Elongation factor 1-gamma (437 aa).

Alanine 2 carries the N-acetylalanine modification. One can recognise a GST N-terminal domain in the interval 2–87 (AAGTLYTYPE…YVSNEELRGS (86 aa)). Residues 88-216 (TPEAAAQVVQ…VKLCEKMAQF (129 aa)) form the GST C-terminal domain. N6-acetyllysine occurs at positions 147 and 212. Residues 221-254 (FAESQPKKDTPRKEKGSREEKQKPQTERKEEKKA) are compositionally biased toward basic and acidic residues. A disordered region spans residues 221–268 (FAESQPKKDTPRKEKGSREEKQKPQTERKEEKKAAAPAPEEEMDECEQ). Lysine 253 participates in a covalent cross-link: Glycyl lysine isopeptide (Lys-Gly) (interchain with G-Cter in SUMO1). The region spanning 276-437 (AKDPFAHLPK…KAVNQGKIFK (162 aa)) is the EF-1-gamma C-terminal domain. Residue lysine 285 forms a Glycyl lysine isopeptide (Lys-Gly) (interchain with G-Cter in SUMO2) linkage. Lysine 401 carries the post-translational modification N6-acetyllysine. An N6-acetyllysine; alternate modification is found at lysine 434. Lysine 434 is modified (N6-malonyllysine; alternate).

EF-1 is composed of four subunits: alpha, beta, delta, and gamma.

Probably plays a role in anchoring the complex to other cellular components. The chain is Elongation factor 1-gamma (Eef1g) from Rattus norvegicus (Rat).